The sequence spans 349 residues: Hydroxymethylglutaryl-CoA synthase (349 aa).

The (3S)-3-hydroxy-3-methylglutaryl-CoA site is built by Asp29 and Ala30. The active-site Proton donor/acceptor is Glu81. (3S)-3-hydroxy-3-methylglutaryl-CoA is bound by residues Cys113 and Thr154. Catalysis depends on Cys113, which acts as the Acyl-thioester intermediate. A CoA-binding site is contributed by Arg202. Positions 204 and 237 each coordinate (3S)-3-hydroxy-3-methylglutaryl-CoA. His237 serves as the catalytic Proton donor/acceptor. Position 242 (Lys242) interacts with CoA. The (3S)-3-hydroxy-3-methylglutaryl-CoA site is built by Lys246, Asn269, and Ser299.

Belongs to the thiolase-like superfamily. Archaeal HMG-CoA synthase family. Interacts with acetoacetyl-CoA thiolase that catalyzes the precedent step in the pathway and with a DUF35 protein. The acetoacetyl-CoA thiolase/HMG-CoA synthase complex channels the intermediate via a fused CoA-binding site, which allows for efficient coupling of the endergonic thiolase reaction with the exergonic HMGCS reaction.

The catalysed reaction is acetoacetyl-CoA + acetyl-CoA + H2O = (3S)-3-hydroxy-3-methylglutaryl-CoA + CoA + H(+). Its pathway is metabolic intermediate biosynthesis; (R)-mevalonate biosynthesis; (R)-mevalonate from acetyl-CoA: step 2/3. Functionally, catalyzes the condensation of acetyl-CoA with acetoacetyl-CoA to form 3-hydroxy-3-methylglutaryl-CoA (HMG-CoA). Functions in the mevalonate (MVA) pathway leading to isopentenyl diphosphate (IPP), a key precursor for the biosynthesis of isoprenoid compounds that are building blocks of archaeal membrane lipids. This Methanosarcina mazei (strain ATCC BAA-159 / DSM 3647 / Goe1 / Go1 / JCM 11833 / OCM 88) (Methanosarcina frisia) protein is Hydroxymethylglutaryl-CoA synthase.